Consider the following 178-residue polypeptide: MSATPEKADDLIVVGKIFSVHGVRGEVKVFSFTDPIENLLGYRNWTLRREGVVKQVELVSGRSTQKDLVVKLKGLDDRDEARLLSGYEICIPRSLLPDLTADEYYWYQLEGLSVINQDEQLFGKVDHLLETGANDVLVVKPCVGSLDDRERLLPYTEQCVLAIDLEAGVMRVEWDADF.

One can recognise a PRC barrel domain in the interval 101 to 178 (ADEYYWYQLE…VMRVEWDADF (78 aa)).

This sequence belongs to the RimM family. In terms of assembly, binds ribosomal protein uS19.

It is found in the cytoplasm. Functionally, an accessory protein needed during the final step in the assembly of 30S ribosomal subunit, possibly for assembly of the head region. Essential for efficient processing of 16S rRNA. May be needed both before and after RbfA during the maturation of 16S rRNA. It has affinity for free ribosomal 30S subunits but not for 70S ribosomes. This chain is Ribosome maturation factor RimM, found in Pseudomonas fluorescens (strain Pf0-1).